The primary structure comprises 92 residues: Small ribosomal subunit protein uS19c (92 aa).

This sequence belongs to the universal ribosomal protein uS19 family.

The protein localises to the plastid. It localises to the chloroplast. In terms of biological role, protein S19 forms a complex with S13 that binds strongly to the 16S ribosomal RNA. The protein is Small ribosomal subunit protein uS19c of Chara vulgaris (Common stonewort).